A 345-amino-acid polypeptide reads, in one-letter code: GTPase Obg (345 aa).

An Obg domain is found at 1 to 159 (MHFLDQAKIF…MWVWLRLKLL (159 aa)). The segment at 121 to 142 (GDGGRGNASYKTSTNRAPRQHG) is disordered. An OBG-type G domain is found at 160–327 (ADCGLVGLPN…VLDKIIEILG (168 aa)). Residues 166–173 (GLPNAGKS), 191–195 (FTTIR), 212–215 (DIPG), 279–282 (NKID), and 308–310 (SGA) each bind GTP. S173 and T193 together coordinate Mg(2+).

This sequence belongs to the TRAFAC class OBG-HflX-like GTPase superfamily. OBG GTPase family. In terms of assembly, monomer. Mg(2+) is required as a cofactor.

Its subcellular location is the cytoplasm. In terms of biological role, an essential GTPase which binds GTP, GDP and possibly (p)ppGpp with moderate affinity, with high nucleotide exchange rates and a fairly low GTP hydrolysis rate. Plays a role in control of the cell cycle, stress response, ribosome biogenesis and in those bacteria that undergo differentiation, in morphogenesis control. The protein is GTPase Obg of Rhizorhabdus wittichii (strain DSM 6014 / CCUG 31198 / JCM 15750 / NBRC 105917 / EY 4224 / RW1) (Sphingomonas wittichii).